Here is a 204-residue protein sequence, read N- to C-terminus: LexA repressor (204 aa).

A DNA-binding region (H-T-H motif) is located at residues 28 to 48 (VREIGQAVGLASSSTVHGHLS). Active-site for autocatalytic cleavage activity residues include Ser126 and Lys164.

Belongs to the peptidase S24 family. As to quaternary structure, homodimer.

It catalyses the reaction Hydrolysis of Ala-|-Gly bond in repressor LexA.. Its function is as follows. Represses a number of genes involved in the response to DNA damage (SOS response), including recA and lexA. In the presence of single-stranded DNA, RecA interacts with LexA causing an autocatalytic cleavage which disrupts the DNA-binding part of LexA, leading to derepression of the SOS regulon and eventually DNA repair. This Bacillus mycoides (strain KBAB4) (Bacillus weihenstephanensis) protein is LexA repressor.